Reading from the N-terminus, the 98-residue chain is MPLIYMNIMLAFTISLLGMLVYRSHLMSSLLCLEGMMLSLFIMTTLMTLNTHSLLANIVPITMLVFAACEAAVGLALLVSISNTYGLDYVHNLNLLQC.

3 helical membrane passes run 1 to 21 (MPLI…GMLV), 29 to 49 (SLLC…LMTL), and 58 to 78 (IVPI…LALL).

Belongs to the complex I subunit 4L family. As to quaternary structure, core subunit of respiratory chain NADH dehydrogenase (Complex I) which is composed of 45 different subunits.

It is found in the mitochondrion inner membrane. The enzyme catalyses a ubiquinone + NADH + 5 H(+)(in) = a ubiquinol + NAD(+) + 4 H(+)(out). Its function is as follows. Core subunit of the mitochondrial membrane respiratory chain NADH dehydrogenase (Complex I) which catalyzes electron transfer from NADH through the respiratory chain, using ubiquinone as an electron acceptor. Part of the enzyme membrane arm which is embedded in the lipid bilayer and involved in proton translocation. The chain is NADH-ubiquinone oxidoreductase chain 4L (MT-ND4L) from Pan paniscus (Pygmy chimpanzee).